The primary structure comprises 121 residues: Chorion class A proteins Ld9 (121 aa).

Belongs to the chorion protein family.

In terms of biological role, this protein is one of many from the eggshell of the gypsy moth. The sequence is that of Chorion class A proteins Ld9 from Lymantria dispar (Gypsy moth).